The sequence spans 492 residues: Catalase isozyme 2 (492 aa).

The segment at 1–32 is disordered; that stretch reads MDPYKFRPSSSNDTPFWTTNAGDPVSNNNSSM. The span at 8–32 shows a compositional bias: polar residues; the sequence is PSSSNDTPFWTTNAGDPVSNNNSSM. Catalysis depends on residues His65 and Asn138. Tyr348 contacts heme.

This sequence belongs to the catalase family. As to quaternary structure, homotetramer. The cofactor is heme. As to expression, abundant in hypocotyls and roots. Low levels are seen in the endosperms and cotyledons.

It localises to the peroxisome. The protein localises to the glyoxysome. The catalysed reaction is 2 H2O2 = O2 + 2 H2O. Its function is as follows. Occurs in almost all aerobically respiring organisms and serves to protect cells from the toxic effects of hydrogen peroxide. The polypeptide is Catalase isozyme 2 (CAT2) (Ricinus communis (Castor bean)).